We begin with the raw amino-acid sequence, 101 residues long: uncharacterized protein (101 aa).

An N-terminal signal peptide occupies residues 1 to 25 (MRKKRLLSRISFSSLFLLCGTLLSA). Cysteine 26 is lipidated: N-palmitoyl cysteine. Residue cysteine 26 is the site of S-diacylglycerol cysteine attachment.

Belongs to the MG439/MG440 family.

It localises to the cell membrane. This is an uncharacterized protein from Mycoplasma pneumoniae (strain ATCC 29342 / M129 / Subtype 1) (Mycoplasmoides pneumoniae).